Reading from the N-terminus, the 143-residue chain is Ribosome-binding factor A (143 aa).

The segment at 123–143 (DKSLQENYKQNDKETKAEKLR) is disordered.

Belongs to the RbfA family. As to quaternary structure, monomer. Binds 30S ribosomal subunits, but not 50S ribosomal subunits or 70S ribosomes.

The protein resides in the cytoplasm. One of several proteins that assist in the late maturation steps of the functional core of the 30S ribosomal subunit. Associates with free 30S ribosomal subunits (but not with 30S subunits that are part of 70S ribosomes or polysomes). Required for efficient processing of 16S rRNA. May interact with the 5'-terminal helix region of 16S rRNA. This Francisella tularensis subsp. novicida (strain U112) protein is Ribosome-binding factor A.